The primary structure comprises 450 residues: Probable malate:quinone oxidoreductase (450 aa).

This sequence belongs to the MQO family. Requires FAD as cofactor.

It carries out the reaction (S)-malate + a quinone = a quinol + oxaloacetate. It functions in the pathway carbohydrate metabolism; tricarboxylic acid cycle; oxaloacetate from (S)-malate (quinone route): step 1/1. This chain is Probable malate:quinone oxidoreductase, found in Helicobacter pylori (strain P12).